A 245-amino-acid polypeptide reads, in one-letter code: uncharacterized protein (245 aa).

This is an uncharacterized protein from Acanthamoeba polyphaga (Amoeba).